Consider the following 295-residue polypeptide: Fructose-bisphosphate aldolase class 1 (295 aa).

The active-site Proton acceptor is Glu176. Lys213 serves as the catalytic Schiff-base intermediate with dihydroxyacetone-P.

Belongs to the class I fructose-bisphosphate aldolase family.

The catalysed reaction is beta-D-fructose 1,6-bisphosphate = D-glyceraldehyde 3-phosphate + dihydroxyacetone phosphate. The protein operates within carbohydrate degradation; glycolysis; D-glyceraldehyde 3-phosphate and glycerone phosphate from D-glucose: step 4/4. This chain is Fructose-bisphosphate aldolase class 1, found in Fusobacterium nucleatum subsp. nucleatum (strain ATCC 25586 / DSM 15643 / BCRC 10681 / CIP 101130 / JCM 8532 / KCTC 2640 / LMG 13131 / VPI 4355).